Reading from the N-terminus, the 1062-residue chain is Carbamoyl phosphate synthase large chain (1062 aa).

The segment at M1–E401 is carboxyphosphate synthetic domain. ATP-binding residues include R129, R169, G175, G176, K208, I210, E215, G241, I242, H243, Q284, and E298. The region spanning K133–V327 is the ATP-grasp 1 domain. Residues Q284, E298, and N300 each contribute to the Mg(2+) site. The Mn(2+) site is built by Q284, E298, and N300. Residues I402–S546 are oligomerization domain. The segment at H547–K929 is carbamoyl phosphate synthetic domain. The ATP-grasp 2 domain maps to D671 to M861. R707, D746, L748, E752, G777, V778, H779, S780, Q820, and E832 together coordinate ATP. Residues Q820, E832, and N834 each contribute to the Mg(2+) site. Q820, E832, and N834 together coordinate Mn(2+). The MGS-like domain maps to M930–Q1062. The allosteric domain stretch occupies residues M930 to Q1062.

It belongs to the CarB family. As to quaternary structure, composed of two chains; the small (or glutamine) chain promotes the hydrolysis of glutamine to ammonia, which is used by the large (or ammonia) chain to synthesize carbamoyl phosphate. Tetramer of heterodimers (alpha,beta)4. Requires Mg(2+) as cofactor. The cofactor is Mn(2+).

It carries out the reaction hydrogencarbonate + L-glutamine + 2 ATP + H2O = carbamoyl phosphate + L-glutamate + 2 ADP + phosphate + 2 H(+). The enzyme catalyses hydrogencarbonate + NH4(+) + 2 ATP = carbamoyl phosphate + 2 ADP + phosphate + 2 H(+). The protein operates within amino-acid biosynthesis; L-arginine biosynthesis; carbamoyl phosphate from bicarbonate: step 1/1. It participates in pyrimidine metabolism; UMP biosynthesis via de novo pathway; (S)-dihydroorotate from bicarbonate: step 1/3. Functionally, large subunit of the glutamine-dependent carbamoyl phosphate synthetase (CPSase). CPSase catalyzes the formation of carbamoyl phosphate from the ammonia moiety of glutamine, carbonate, and phosphate donated by ATP, constituting the first step of 2 biosynthetic pathways, one leading to arginine and/or urea and the other to pyrimidine nucleotides. The large subunit (synthetase) binds the substrates ammonia (free or transferred from glutamine from the small subunit), hydrogencarbonate and ATP and carries out an ATP-coupled ligase reaction, activating hydrogencarbonate by forming carboxy phosphate which reacts with ammonia to form carbamoyl phosphate. In Lactobacillus acidophilus (strain ATCC 700396 / NCK56 / N2 / NCFM), this protein is Carbamoyl phosphate synthase large chain.